Here is a 419-residue protein sequence, read N- to C-terminus: F-box/FBD/LRR-repeat protein At4g26340 (419 aa).

An F-box domain is found at 1-53 (MDRISQLSDDLLLQILSFIPGKDVVATSLLSKRWQSLWMLVSELEYDDSYHTG). LRR repeat units lie at residues 55-81 (YKSFSQFVYRSLLSNNAPVIKHLHLNL), 132-159 (TLRLINFVLLDVPSSVCLPSLKVLHLKT), 160-185 (VDYEDDASLPSLLFGCPNLEELFVER), 187-208 (DQDLEMDVTFVVPSLRRLSMID), 226-253 (YLNITDDAVYDVRQIENMPELVEAHVDI), 254-284 (TQGVTHKFLRALTSVRQLSLCLSLSEVMCPS), and 299-324 (VVKGWWDLLTSMLQDSPKLQSLKLID). The 51-residue stretch at 339-389 (GWKLPSSVPECLLFSLEAFEWIGYKGRRGDREVATYVLKNAACLRTAKFSP) folds into the FBD domain.

This is F-box/FBD/LRR-repeat protein At4g26340 from Arabidopsis thaliana (Mouse-ear cress).